The following is a 356-amino-acid chain: Carminomycin 4-O-methyltransferase DauK (356 aa).

Residue arginine 153 coordinates S-adenosyl-L-methionine. Aspartate 163 is a substrate binding site. S-adenosyl-L-methionine contacts are provided by residues glycine 187, glutamate 210, 237–238 (DF), and serine 252. Substrate is bound by residues asparagine 257 and arginine 303.

It belongs to the class I-like SAM-binding methyltransferase superfamily. Cation-independent O-methyltransferase family. In terms of assembly, homodimer and homotetramer in equilibrium.

The enzyme catalyses carminomycin + S-adenosyl-L-methionine = daunorubicin + S-adenosyl-L-homocysteine + H(+). It participates in antibiotic biosynthesis; daunorubicin biosynthesis. It functions in the pathway antibiotic biosynthesis; carminomycin biosynthesis. Its activity is regulated as follows. Strongly inhibited by S-adenosyl-L-homocysteine and weakly by adenine and methionine. Involved in the biosynthesis of the anthracyclines carminomycin and daunorubicin (daunomycin) which are aromatic polyketide antibiotics that exhibit high cytotoxicity and are widely applied in the chemotherapy of a variety of cancers. In vivo, catalyzes the transfer of a methyl group from S-adenosyl-L-methionine to the 4-O-position of carminomycin to form daunorubicin. In vitro, it also methylates the anthracyclines rhodomycin D (10-carbomethoxy-13-deoxycarminomycin), 10-carboxy-13-deoxycarminomycin, 13-deoxy-carminomycin and 13-dihydrocarminomycin at the 4-hydroxyl position. The protein is Carminomycin 4-O-methyltransferase DauK (dauK) of Streptomyces sp. (strain C5).